Reading from the N-terminus, the 273-residue chain is Undecaprenyl-diphosphatase (273 aa).

8 consecutive transmembrane segments (helical) span residues I3–P23, G48–F68, L89–E109, L116–A136, I151–F171, A192–L212, F225–L245, and L253–A273.

Belongs to the UppP family.

It is found in the cell membrane. The enzyme catalyses di-trans,octa-cis-undecaprenyl diphosphate + H2O = di-trans,octa-cis-undecaprenyl phosphate + phosphate + H(+). Functionally, catalyzes the dephosphorylation of undecaprenyl diphosphate (UPP). Confers resistance to bacitracin. The polypeptide is Undecaprenyl-diphosphatase (Anoxybacillus flavithermus (strain DSM 21510 / WK1)).